We begin with the raw amino-acid sequence, 224 residues long: 7-cyano-7-deazaguanine synthase (224 aa).

Residue 10–20 (LSGGLDSATVV) coordinates ATP. Zn(2+) is bound by residues C189, C199, C202, and C205.

The protein belongs to the QueC family. Requires Zn(2+) as cofactor.

It carries out the reaction 7-carboxy-7-deazaguanine + NH4(+) + ATP = 7-cyano-7-deazaguanine + ADP + phosphate + H2O + H(+). It functions in the pathway purine metabolism; 7-cyano-7-deazaguanine biosynthesis. Its function is as follows. Catalyzes the ATP-dependent conversion of 7-carboxy-7-deazaguanine (CDG) to 7-cyano-7-deazaguanine (preQ(0)). The sequence is that of 7-cyano-7-deazaguanine synthase from Pseudomonas paraeruginosa (strain DSM 24068 / PA7) (Pseudomonas aeruginosa (strain PA7)).